The primary structure comprises 236 residues: Small ribosomal subunit protein eS6 (236 aa).

Residues Ser232 and Ser233 each carry the phosphoserine modification.

It belongs to the eukaryotic ribosomal protein eS6 family. In terms of processing, phosphorylated.

The protein is Small ribosomal subunit protein eS6 (RPS6) of Eremothecium gossypii (strain ATCC 10895 / CBS 109.51 / FGSC 9923 / NRRL Y-1056) (Yeast).